The sequence spans 221 residues: Orotidine 5'-phosphate decarboxylase (221 aa).

Residues aspartate 12, lysine 34, 60 to 69, serine 117, 170 to 180, glycine 193, and arginine 194 each bind substrate; these read DFKVADIPNT and PGVGAQGGKAS. Lysine 62 acts as the Proton donor in catalysis.

It belongs to the OMP decarboxylase family. Type 1 subfamily. Homodimer.

It carries out the reaction orotidine 5'-phosphate + H(+) = UMP + CO2. It participates in pyrimidine metabolism; UMP biosynthesis via de novo pathway; UMP from orotate: step 2/2. Functionally, catalyzes the decarboxylation of orotidine 5'-monophosphate (OMP) to uridine 5'-monophosphate (UMP). The protein is Orotidine 5'-phosphate decarboxylase of Methanosarcina acetivorans (strain ATCC 35395 / DSM 2834 / JCM 12185 / C2A).